The chain runs to 201 residues: Holliday junction resolvase RecU (201 aa).

The segment at 1–26 (MAIGYPNGKKYAASQEELPQQKRKAP) is disordered. 4 residues coordinate Mg(2+): Thr-87, Asp-89, Glu-102, and Gln-121.

The protein belongs to the RecU family. Mg(2+) serves as cofactor.

The protein localises to the cytoplasm. The catalysed reaction is Endonucleolytic cleavage at a junction such as a reciprocal single-stranded crossover between two homologous DNA duplexes (Holliday junction).. Functionally, endonuclease that resolves Holliday junction intermediates in genetic recombination. Cleaves mobile four-strand junctions by introducing symmetrical nicks in paired strands. Promotes annealing of linear ssDNA with homologous dsDNA. Required for DNA repair, homologous recombination and chromosome segregation. This Listeria monocytogenes serotype 4a (strain HCC23) protein is Holliday junction resolvase RecU.